Consider the following 339-residue polypeptide: Silicatein (339 aa).

The signal sequence occupies residues 1–18; it reads MAIVYGAILFQIILIACA. A propeptide spanning residues 19-122 is cleaved from the precursor; it reads EFPPEWHAWK…REYQAPATVS (104 aa). L123 carries the n,N-dimethylleucine; alternate modification. L123 carries the post-translational modification N-methylleucine; alternate. S188 bears the Phosphoserine mark. Phosphotyrosine is present on Y219. Residues H286 and N306 contribute to the active site. Phosphoserine is present on S335.

Belongs to the peptidase C1 family. In terms of assembly, homodimer. Homodimerization occurs as a result of non-covalent interactions and not through disulfide linkages between the two monomers.

Its function is as follows. Polymerizes silica around the axial filament during spicule formation. In Petrosia ficiformis (Common Mediterranean sponge), this protein is Silicatein.